The chain runs to 509 residues: Probable xyloglucan galactosyltransferase GT12 (509 aa).

Residues 1 to 3 are Cytoplasmic-facing; the sequence is MMK. Residues 4–24 traverse the membrane as a helical; Signal-anchor for type II membrane protein segment; that stretch reads PVPKLWVVISSAFVFCLLVLF. Topologically, residues 25–509 are lumenal; sequence QINKSDLIEA…KLEIIHEKTA (485 aa). N27, N59, N65, N169, N170, N195, N257, and N416 each carry an N-linked (GlcNAc...) asparagine glycan.

The protein belongs to the glycosyltransferase 47 family. Expressed in pollen grains.

It localises to the golgi apparatus membrane. Its function is as follows. Functions in xyloglucan synthesis by adding side chains to the xylosylated glucan backbone. Involved in the galactosylation of hemicellulose xyloglucan. This is Probable xyloglucan galactosyltransferase GT12 from Arabidopsis thaliana (Mouse-ear cress).